Here is a 218-residue protein sequence, read N- to C-terminus: MDIQLFQGYGGKVIVAVDYGERKCGVAFGEILPQKSLVIPTKNLKEFIRKLKPDKIIFGLPLSMSGKYTQQTFKTVAVAFKFSKEYETYLCDERLTTKIGERISKRDDAVSAALIFQSFFENSSVCEKVTDPRKKVDLALEKVDGEVLLYEFPDPSLNIEAREVDVVTKNPVLAYFYSKNGYFVGRELWEKKYDLIISGKNCEELKKYLKENGRLVCL.

It belongs to the YqgF nuclease family.

Its subcellular location is the cytoplasm. In terms of biological role, could be a nuclease involved in processing of the 5'-end of pre-16S rRNA. The polypeptide is Putative pre-16S rRNA nuclease (Thermotoga maritima (strain ATCC 43589 / DSM 3109 / JCM 10099 / NBRC 100826 / MSB8)).